A 468-amino-acid chain; its full sequence is E3 ubiquitin-protein ligase TRIM11 (468 aa).

An RING-type zinc finger spans residues Cys-16–Arg-57. Residue Ser-85 is modified to Phosphoserine. The B box-type zinc-finger motif lies at Val-87–Leu-128. Zn(2+)-binding residues include Cys-92, His-95, Cys-114, and His-120. Positions Leu-128–Glu-233 form a coiled coil. The B30.2/SPRY domain occupies Glu-268–Pro-461. A Glycyl lysine isopeptide (Lys-Gly) (interchain with G-Cter in ubiquitin) cross-link involves residue Lys-458.

The protein belongs to the TRIM/RBCC family. Binds cytoplasmic tail of integrin alpha-1. Interacts with the HN peptide. Interacts with PHOX2B. Interacts (when autoubiquitinated) with SQSTM1/p62; promoting AIM2 recruitment to autophagosomes. Interacts with AIM2; promoting its autophagy-dependent degradation. Autoubiquitinated upon DNA stimulation; autoubiquitination promotes interaction with SQSTM1/p62 and recruitment of AIM2 to autophagosomes.

The protein resides in the cytoplasm. It localises to the nucleus. The enzyme catalyses S-ubiquitinyl-[E2 ubiquitin-conjugating enzyme]-L-cysteine + [acceptor protein]-L-lysine = [E2 ubiquitin-conjugating enzyme]-L-cysteine + N(6)-ubiquitinyl-[acceptor protein]-L-lysine.. The protein operates within protein modification; protein ubiquitination. In terms of biological role, E3 ubiquitin-protein ligase that promotes the degradation of insoluble ubiquitinated proteins, including insoluble PAX6, poly-Gln repeat expanded HTT and poly-Ala repeat expanded ARX. Mediates PAX6 ubiquitination leading to proteasomal degradation, thereby modulating cortical neurogenesis. May also inhibit PAX6 transcriptional activity, possibly in part by preventing the binding of PAX6 to its consensus sequences. May contribute to the regulation of the intracellular level of HN (humanin) or HN-containing proteins through the proteasomal degradation pathway. Mediates MED15 ubiquitination leading to proteasomal degradation. May contribute to the innate restriction of retroviruses. Upon overexpression, reduces HIV-1 and murine leukemia virus infectivity, by suppressing viral gene expression. Antiviral activity depends on a functional E3 ubiquitin-protein ligase domain. May regulate TRIM5 turnover via the proteasome pathway, thus counteracting the TRIM5-mediated cross-species restriction of retroviral infection at early stages of the retroviral life cycle. Acts as an inhibitor of the AIM2 inflammasome by promoting autophagy-dependent degradation of AIM2. Mechanistically, undergoes autoubiquitination upon DNA stimulation, promoting interaction with AIM2 and SQSTM1/p62, leading to AIM2 recruitment to autophagosomes. The sequence is that of E3 ubiquitin-protein ligase TRIM11 (TRIM11) from Bos taurus (Bovine).